Here is a 703-residue protein sequence, read N- to C-terminus: Lethal(3)malignant brain tumor-like protein 2 (703 aa).

The segment at 1–70 is disordered; that stretch reads MEKPRGTEET…AGELPTSPLH (70 aa). S13 is modified (phosphoserine). Over residues 15–25 the composition is skewed to acidic residues; the sequence is PMEEEEDDDLE. A compositionally biased stretch (low complexity) spans 35 to 49; it reads SYNSSAGSESSSYLE. A compositionally biased stretch (acidic residues) spans 50-60; the sequence is ESSEAENEDRE. S67 bears the Phosphoserine mark. Residues 81-116 form an FCS-type zinc finger; the sequence is DGSGSEPAVCEMCGIVGTREAFFSKTKRFCSVSCSR. C90, C93, C110, and C114 together coordinate Zn(2+). 4 MBT repeats span residues 179–283, 291–391, 397–500, and 508–604; these read FDWG…LVPP, TDWK…IKMS, MSHH…LTPP, and FDWE…LQPP. S338 carries the post-translational modification Phosphoserine. K405 participates in a covalent cross-link: Glycyl lysine isopeptide (Lys-Gly) (interchain with G-Cter in SUMO2). Disordered stretches follow at residues 604-649 and 672-703; these read PVSA…KKPL and VKEEHQDLPSPDRSPSPLLPLPTESIKQERDS. A compositionally biased stretch (basic residues) spans 619–634; that stretch reads TKKKKKQFGKKRKRIP. Glycyl lysine isopeptide (Lys-Gly) (interchain with G-Cter in SUMO2) cross-links involve residues K647 and K673. Phosphoserine is present on residues S681, S685, and S687. A Glycyl lysine isopeptide (Lys-Gly) (interchain with G-Cter in SUMO1); alternate cross-link involves residue K698. K698 is covalently cross-linked (Glycyl lysine isopeptide (Lys-Gly) (interchain with G-Cter in SUMO2); alternate).

In terms of assembly, part of the E2F6.com-1 complex in G0 phase composed of E2F6, MGA, MAX, TFDP1, CBX3, BAT8, EUHMTASE1, RING1, RNF2, MBLR, BAT8 and YAF2.

It is found in the nucleus. Functionally, putative Polycomb group (PcG) protein. PcG proteins maintain the transcriptionally repressive state of genes, probably via a modification of chromatin, rendering it heritably changed in its expressibility. Its association with a chromatin-remodeling complex suggests that it may contribute to prevent expression of genes that trigger the cell into mitosis. Binds to monomethylated and dimethylated 'Lys-20' on histone H4. Binds histone H3 peptides that are monomethylated or dimethylated on 'Lys-4', 'Lys-9' or 'Lys-27'. In Rattus norvegicus (Rat), this protein is Lethal(3)malignant brain tumor-like protein 2 (L3mbtl2).